A 201-amino-acid chain; its full sequence is Small ribosomal subunit protein uS4c (201 aa).

The tract at residues 20–44 (GLTSKRPRAGSDLRNQSRSGKKSQY) is disordered. Residues 89–152 (MRLDNILFRL…NSRTLVQNLL (64 aa)) enclose the S4 RNA-binding domain.

The protein belongs to the universal ribosomal protein uS4 family. Part of the 30S ribosomal subunit. Contacts protein S5. The interaction surface between S4 and S5 is involved in control of translational fidelity.

Its subcellular location is the plastid. It is found in the chloroplast. In terms of biological role, one of the primary rRNA binding proteins, it binds directly to 16S rRNA where it nucleates assembly of the body of the 30S subunit. Functionally, with S5 and S12 plays an important role in translational accuracy. The polypeptide is Small ribosomal subunit protein uS4c (rps4) (Aethionema cordifolium (Lebanon stonecress)).